The chain runs to 235 residues: Transmembrane emp24 domain-containing protein 9 (235 aa).

The signal sequence occupies residues 1-37; it reads MAVELGVLLVRPRPGTGLGRVMRTLLLVLWLATRGSA. The Lumenal portion of the chain corresponds to 38 to 202; it reads LYFHIGETEK…RQTSESTNQR (165 aa). The GOLD domain maps to 47–145; that stretch reads KKCFIEEIPD…MLRVHLDIQV (99 aa). The tract at residues 121–160 is required for interaction with STX17; it reads CLHSNSTKFSLFAGGMLRVHLDIQVGEHANDYAEIAAKDK. N-linked (GlcNAc...) asparagine glycosylation occurs at Asn125. Positions 154–184 form a coiled coil; it reads EIAAKDKLSELQLRVRQLVEQVEQIQKEQNY. Lys160 is subject to N6-acetyllysine. The chain crosses the membrane as a helical span at residues 203 to 222; it reads VLWWSILQTLILVAIGVWQM. The Cytoplasmic segment spans residues 223–235; it reads RHLKSFFEAKKLV. Positions 228 to 229 match the COPII vesicle coat-binding motif; sequence FF. The short motif at 228 to 235 is the COPI vesicle coat-binding element; sequence FFEAKKLV.

This sequence belongs to the EMP24/GP25L family. Monomer and homodimer in endoplasmic reticulum. Predominantly monomeric and to lesser extent homodimeric in endoplasmic reticulum-Golgi intermediate compartment and cis-Golgi network. Probably oligomerizes with other members of the EMP24/GP25L family such as TMED2, TMED7 and TMED10. Interacts with TMED5. Interacts (via C-terminus) with COPG1; the interaction involves dimeric TMED9. Interacts with PTPN2 and SPAST. Interacts with STX17; the interaction is direct. Post-translationally, N-linked glycosylated containing high mannose.

Its subcellular location is the endoplasmic reticulum membrane. The protein resides in the golgi apparatus. The protein localises to the cis-Golgi network membrane. It is found in the endoplasmic reticulum-Golgi intermediate compartment membrane. It localises to the trans-Golgi network membrane. In terms of biological role, appears to be involved in vesicular protein trafficking, mainly in the early secretory pathway. In COPI vesicle-mediated retrograde transport involved in the coatomer recruitment to membranes of the early secretory pathway. Increases coatomer-dependent activity of ARFGAP2. Thought to play a crucial role in the specific retention of p24 complexes in cis-Golgi membranes; specifically contributes to the coupled localization of TMED2 and TMED10 in the cis-Golgi network. May be involved in organization of intracellular membranes, such as of the ER-Golgi intermediate compartment and the Golgi apparatus. Involved in ER localization of PTPN2 isoform PTPB. The chain is Transmembrane emp24 domain-containing protein 9 (TMED9) from Homo sapiens (Human).